A 434-amino-acid chain; its full sequence is Probable phosphatidylinositol 3,4,5-trisphosphate 3-phosphatase TEP1 (434 aa).

The Phosphatase tensin-type domain maps to 33–255 (KTKNDIGLRL…RYHEFFITHE (223 aa)). Cysteine 193 functions as the Phosphocysteine intermediate in the catalytic mechanism.

The enzyme catalyses a 1,2-diacyl-sn-glycero-3-phospho-(1D-myo-inositol-3,4,5-trisphosphate) + H2O = a 1,2-diacyl-sn-glycero-3-phospho-(1D-myo-inositol-4,5-bisphosphate) + phosphate. Functionally, may act as a phosphoinositide 3-phosphatase by regulating PtdIns(3,4,5)P3 levels. The sequence is that of Probable phosphatidylinositol 3,4,5-trisphosphate 3-phosphatase TEP1 (TEP1) from Saccharomyces cerevisiae (strain ATCC 204508 / S288c) (Baker's yeast).